We begin with the raw amino-acid sequence, 804 residues long: Probable replication endonuclease from prophage-like region (804 aa).

Catalysis depends on O-(5'-phospho-DNA)-tyrosine intermediate residues Tyr498 and Tyr502.

Belongs to the phage GPA family.

Functionally, possible endonuclease which induces a single-strand cut and initiates DNA replication. The chain is Probable replication endonuclease from prophage-like region from Shigella boydii serotype 4 (strain Sb227).